A 130-amino-acid polypeptide reads, in one-letter code: Small ribosomal subunit protein uS8 (130 aa).

The protein belongs to the universal ribosomal protein uS8 family. As to quaternary structure, part of the 30S ribosomal subunit.

In terms of biological role, one of the primary rRNA binding proteins, it binds directly to 16S rRNA central domain where it helps coordinate assembly of the platform of the 30S subunit. The sequence is that of Small ribosomal subunit protein uS8 from Methanocella arvoryzae (strain DSM 22066 / NBRC 105507 / MRE50).